A 435-amino-acid chain; its full sequence is Tol-Pal system protein TolB (435 aa).

The first 28 residues, 1-28 (MVKCSLIRALMVIAGLIGAAAFTTPANA), serve as a signal peptide directing secretion. The segment at 288–310 (STAAIDTSPSYSPDGARVSFESD) is disordered.

This sequence belongs to the TolB family. In terms of assembly, the Tol-Pal system is composed of five core proteins: the inner membrane proteins TolA, TolQ and TolR, the periplasmic protein TolB and the outer membrane protein Pal. They form a network linking the inner and outer membranes and the peptidoglycan layer.

The protein resides in the periplasm. Its function is as follows. Part of the Tol-Pal system, which plays a role in outer membrane invagination during cell division and is important for maintaining outer membrane integrity. This Rhizobium leguminosarum bv. trifolii (strain WSM2304) protein is Tol-Pal system protein TolB.